A 589-amino-acid polypeptide reads, in one-letter code: Muscarinic acetylcholine receptor M3 (589 aa).

At 1–66 (MTLHSNSTTS…DPLGGHTIWQ (66 aa)) the chain is on the extracellular side. N-linked (GlcNAc...) asparagine glycosylation is found at N6, N15, N41, N48, and N52. A helical membrane pass occupies residues 67–90 (VVFIAFLTGFLALVTIIGNILVIV). Topologically, residues 91–103 (AFKVNKQLKTVNN) are cytoplasmic. Residues 104–129 (YFLLSLACADLIIGVISMNLFTTYII) traverse the membrane as a helical segment. Residues 130–141 (MNRWALGNLACD) are Extracellular-facing. C140 and C220 are oxidised to a cystine. Residues 142 to 163 (LWLSIDYVASNASVMNLLVISF) form a helical membrane-spanning segment. Residues 164 to 183 (DRYFSITRPLTYRAKRTTKR) are Cytoplasmic-facing. A helical membrane pass occupies residues 184–205 (AGVMIGLAWVISFVLWAPAILF). The Extracellular portion of the chain corresponds to 206–228 (WQYFVGKRTVPPGECFIQFLSEP). Residues 229–251 (TITFGTAIAAFYMPVTIMTILYW) form a helical membrane-spanning segment. Residues 252–490 (RIYKETEKRT…SLIKEKKAAQ (239 aa)) lie on the Cytoplasmic side of the membrane. The short motif at 274–280 (AEAENFV) is the Basolateral sorting signal element. Residues 323–356 (AEQMDQDHSSSDSWNNNDAAASLENSASSDEEDI) are disordered. A compositionally biased stretch (low complexity) spans 333–344 (SDSWNNNDAAAS). S384 carries the phosphoserine modification. A helical transmembrane segment spans residues 491–513 (TLSAILLAFIITWTPYNIMVLVN). The Extracellular segment spans residues 514-525 (TFCDSCIPKTYW). C516 and C519 are disulfide-bonded. The chain crosses the membrane as a helical span at residues 526 to 545 (NLGYWLCYINSTVNPVCYAL). Residues 546–589 (CNKTFRTTFKTLLLCQCDKRKRRKQQYQQRQSVIFHKRVPEQAL) are Cytoplasmic-facing.

It belongs to the G-protein coupled receptor 1 family. Muscarinic acetylcholine receptor subfamily. CHRM3 sub-subfamily. In terms of assembly, homodimer; the dimers can form tetramers. Interacts with NALCN. Interacts with TMEM147.

It localises to the cell membrane. Its subcellular location is the postsynaptic cell membrane. It is found in the basolateral cell membrane. The protein resides in the endoplasmic reticulum membrane. The muscarinic acetylcholine receptor mediates various cellular responses, including inhibition of adenylate cyclase, breakdown of phosphoinositides and modulation of potassium channels through the action of G proteins. Primary transducing effect is Pi turnover. The chain is Muscarinic acetylcholine receptor M3 (Chrm3) from Rattus norvegicus (Rat).